Consider the following 206-residue polypeptide: uncharacterized protein (206 aa).

This is an uncharacterized protein from Saccharomyces cerevisiae (strain ATCC 204508 / S288c) (Baker's yeast).